A 459-amino-acid chain; its full sequence is Bifunctional protein GlmU (459 aa).

The segment at 1–229 (MSNYAIILAA…FDESLGVNDR (229 aa)) is pyrophosphorylase. Residues 8-11 (LAAG), Lys-22, Gln-72, and 77-78 (GT) each bind UDP-N-acetyl-alpha-D-glucosamine. Asp-102 provides a ligand contact to Mg(2+). UDP-N-acetyl-alpha-D-glucosamine contacts are provided by Gly-139, Glu-154, Asn-169, and Asn-227. Mg(2+) is bound at residue Asn-227. The interval 230 to 250 (VALATAEKVMRHRIARQHMVN) is linker. An N-acetyltransferase region spans residues 251–459 (GVTVVNPDSA…NKKPHHPSQK (209 aa)). Residues Arg-332 and Lys-350 each contribute to the UDP-N-acetyl-alpha-D-glucosamine site. Catalysis depends on His-362, which acts as the Proton acceptor. UDP-N-acetyl-alpha-D-glucosamine is bound by residues Tyr-365 and Asn-376. Residues Ala-379, 385-386 (NY), Ser-404, Ala-422, and Arg-439 contribute to the acetyl-CoA site.

The protein in the N-terminal section; belongs to the N-acetylglucosamine-1-phosphate uridyltransferase family. This sequence in the C-terminal section; belongs to the transferase hexapeptide repeat family. As to quaternary structure, homotrimer. Mg(2+) is required as a cofactor.

The protein resides in the cytoplasm. The catalysed reaction is alpha-D-glucosamine 1-phosphate + acetyl-CoA = N-acetyl-alpha-D-glucosamine 1-phosphate + CoA + H(+). It catalyses the reaction N-acetyl-alpha-D-glucosamine 1-phosphate + UTP + H(+) = UDP-N-acetyl-alpha-D-glucosamine + diphosphate. It functions in the pathway nucleotide-sugar biosynthesis; UDP-N-acetyl-alpha-D-glucosamine biosynthesis; N-acetyl-alpha-D-glucosamine 1-phosphate from alpha-D-glucosamine 6-phosphate (route II): step 2/2. The protein operates within nucleotide-sugar biosynthesis; UDP-N-acetyl-alpha-D-glucosamine biosynthesis; UDP-N-acetyl-alpha-D-glucosamine from N-acetyl-alpha-D-glucosamine 1-phosphate: step 1/1. It participates in bacterial outer membrane biogenesis; LPS lipid A biosynthesis. Its function is as follows. Catalyzes the last two sequential reactions in the de novo biosynthetic pathway for UDP-N-acetylglucosamine (UDP-GlcNAc). The C-terminal domain catalyzes the transfer of acetyl group from acetyl coenzyme A to glucosamine-1-phosphate (GlcN-1-P) to produce N-acetylglucosamine-1-phosphate (GlcNAc-1-P), which is converted into UDP-GlcNAc by the transfer of uridine 5-monophosphate (from uridine 5-triphosphate), a reaction catalyzed by the N-terminal domain. The sequence is that of Bifunctional protein GlmU from Streptococcus agalactiae serotype V (strain ATCC BAA-611 / 2603 V/R).